Consider the following 389-residue polypeptide: Ribosomal RNA large subunit methyltransferase M (389 aa).

Residues 1 to 13 show a composition bias toward polar residues; it reads MIGNARMSQKYPT. The disordered stretch occupies residues 1-24; sequence MIGNARMSQKYPTSSSRKRSPLSS. Residues Ser214, 247-250, Asp266, Asp286, and Asp302 each bind S-adenosyl-L-methionine; that span reads APGG. The active-site Proton acceptor is the Lys331.

It belongs to the class I-like SAM-binding methyltransferase superfamily. RNA methyltransferase RlmE family. RlmM subfamily. Monomer.

It localises to the cytoplasm. It catalyses the reaction cytidine(2498) in 23S rRNA + S-adenosyl-L-methionine = 2'-O-methylcytidine(2498) in 23S rRNA + S-adenosyl-L-homocysteine + H(+). Catalyzes the 2'-O-methylation at nucleotide C2498 in 23S rRNA. This chain is Ribosomal RNA large subunit methyltransferase M, found in Hahella chejuensis (strain KCTC 2396).